The following is a 510-amino-acid chain: Histidine ammonia-lyase (510 aa).

A cross-link (5-imidazolinone (Ala-Gly)) is located at residues 143–145; that stretch reads ASG. Serine 144 is modified (2,3-didehydroalanine (Ser)).

The protein belongs to the PAL/histidase family. In terms of processing, contains an active site 4-methylidene-imidazol-5-one (MIO), which is formed autocatalytically by cyclization and dehydration of residues Ala-Ser-Gly.

It is found in the cytoplasm. It catalyses the reaction L-histidine = trans-urocanate + NH4(+). Its pathway is amino-acid degradation; L-histidine degradation into L-glutamate; N-formimidoyl-L-glutamate from L-histidine: step 1/3. The protein is Histidine ammonia-lyase of Pseudomonas putida (strain ATCC 47054 / DSM 6125 / CFBP 8728 / NCIMB 11950 / KT2440).